The chain runs to 404 residues: uncharacterized protein (404 aa).

This is an uncharacterized protein from Ostreid herpesvirus 1 (isolate France) (OsHV-1).